The following is a 219-amino-acid chain: Sugar transporter SWEET1 (219 aa).

The next 7 membrane-spanning stretches (helical) occupy residues 3 to 23 (FLQL…TTGL), 38 to 58 (VQFL…YYGL), 63 to 83 (GTVI…IATY), 98 to 118 (LLMV…ISPG), 125 to 145 (LGLT…ADLL), 156 to 176 (LSFS…LYGL), and 189 to 209 (PGIF…AVIP). The MtN3/slv 1 domain occupies 5-90 (QLLSCACIIF…ATYCHYTKEK (86 aa)). The region spanning 124–204 (QLGLTCSVFT…LIRFFLFWWF (81 aa)) is the MtN3/slv 2 domain.

Belongs to the SWEET sugar transporter family.

Its subcellular location is the golgi apparatus membrane. The protein resides in the cell membrane. Mediates sugar transport across membranes. The sequence is that of Sugar transporter SWEET1 (slc50a1) from Danio rerio (Zebrafish).